A 108-amino-acid chain; its full sequence is ADM5 (108 aa).

The signal sequence occupies residues 1 to 18 (MTAHILLLWLFASSILGD). Residues 19–25 (PDSAGRL) constitute a propeptide that is removed on maturation. Cys-38 and Cys-43 are disulfide-bonded. The interval 61-108 (KELSGKAGRKPQDPYSYGRRRRRRRRRREARLLRRLQDPSLRRAQLAG) is disordered. Position 77 is a tyrosine amide (Tyr-77). Residues 78-89 (GRRRRRRRRRRE) show a composition bias toward basic residues. The propeptide occupies 89–108 (EARLLRRLQDPSLRRAQLAG). A compositionally biased stretch (basic and acidic residues) spans 90–101 (ARLLRRLQDPSL).

Belongs to the adrenomedullin family. In terms of tissue distribution, expressed abundantly in the spleen and thymus. Also expressed in adrenal and pituitary. Not expressed in brain, heart, kidney, liver and stomach.

It is found in the secreted. In terms of biological role, seems to have a peripheral vasodepressor effect and a central vasopressor effect. The chain is ADM5 (ADM5) from Sus scrofa (Pig).